We begin with the raw amino-acid sequence, 435 residues long: Flavonol 7-O-rhamnosyltransferase (435 aa).

Gln-18 contributes to the UDP binding site. A UDP-beta-L-rhamnose-binding site is contributed by Gln-18. His-21 acts as the Proton acceptor in catalysis. His-21 provides a ligand contact to quercetin. Catalysis depends on Asp-119, which acts as the Charge relay. Positions 250, 315, 332, 336, 337, and 340 each coordinate UDP. UDP-beta-L-rhamnose is bound by residues Ser-250, Ala-315, His-332, Gly-336, Ser-337, and Glu-340.

Belongs to the UDP-glycosyltransferase family. In terms of tissue distribution, highly expressed in floral buds. Expressed in stems, leaves and flowers. Expressed at low levels in roots and siliques. Expressed on the adaxial side of cotyledons and emerging leaves, in trichomes, root columella cells, and the late elongation/early differentiation zone of roots.

The catalysed reaction is quercitrin + UDP-beta-L-rhamnose = quercetin 3,7-bis-O-alpha-L-rhamnoside + UDP + H(+). The enzyme catalyses quercetin 3-O-beta-D-glucoside + UDP-beta-L-rhamnose = quercetin 3-O-beta-D-glucoside-7-O-alpha-L-rhamnoside + UDP + H(+). It participates in flavonoid metabolism. Flavonol 7-O-rhamnosyltransferase that catalyzes the transfer of rhamnose from UDP-rhamnose to the 7-OH position of 3-O-glycosylated flavonols, such as kaempferol 3-O-rhamnoside, kaempferol 3-O-glucoside, quercetin 3-O-glucoside, quercetin 3-O-galactoside, quercetin 3-O-rhamnoside and isorhamnetin 3-O-glucoside. Is able to glycosylate the flavonols quercetin and kaempferol to yield quercetin 7-O-rhamnoside and kaempferol 7-O-rhamnoside. Shows a strict specificity for UDP-rhamnose as sugar donor. Does not act on 3-O-glycosylated anthocyanins. The accumulation of kaempferol 3-O-rhamnoside-7-O-rhamnoside inhibits basipetal auxin transport, which influences auxin distribution and plant organ development. The polypeptide is Flavonol 7-O-rhamnosyltransferase (Arabidopsis thaliana (Mouse-ear cress)).